Here is a 95-residue protein sequence, read N- to C-terminus: Co-chaperonin GroES (95 aa).

Belongs to the GroES chaperonin family. As to quaternary structure, heptamer of 7 subunits arranged in a ring. Interacts with the chaperonin GroEL.

Its subcellular location is the cytoplasm. Its function is as follows. Together with the chaperonin GroEL, plays an essential role in assisting protein folding. The GroEL-GroES system forms a nano-cage that allows encapsulation of the non-native substrate proteins and provides a physical environment optimized to promote and accelerate protein folding. GroES binds to the apical surface of the GroEL ring, thereby capping the opening of the GroEL channel. The chain is Co-chaperonin GroES from Streptococcus salivarius.